Here is a 401-residue protein sequence, read N- to C-terminus: Imidazolonepropionase (401 aa).

Residues histidine 66 and histidine 68 each coordinate Fe(3+). The Zn(2+) site is built by histidine 66 and histidine 68. Positions 75, 138, and 171 each coordinate 4-imidazolone-5-propanoate. N-formimidoyl-L-glutamate is bound at residue tyrosine 138. Residue histidine 236 coordinates Fe(3+). Histidine 236 contributes to the Zn(2+) binding site. 4-imidazolone-5-propanoate is bound at residue glutamine 239. Aspartate 311 contributes to the Fe(3+) binding site. Aspartate 311 serves as a coordination point for Zn(2+). Asparagine 313 and glycine 315 together coordinate N-formimidoyl-L-glutamate. Threonine 316 is a 4-imidazolone-5-propanoate binding site.

The protein belongs to the metallo-dependent hydrolases superfamily. HutI family. Zn(2+) serves as cofactor. Fe(3+) is required as a cofactor.

Its subcellular location is the cytoplasm. The catalysed reaction is 4-imidazolone-5-propanoate + H2O = N-formimidoyl-L-glutamate. It functions in the pathway amino-acid degradation; L-histidine degradation into L-glutamate; N-formimidoyl-L-glutamate from L-histidine: step 3/3. In terms of biological role, catalyzes the hydrolytic cleavage of the carbon-nitrogen bond in imidazolone-5-propanoate to yield N-formimidoyl-L-glutamate. It is the third step in the universal histidine degradation pathway. The chain is Imidazolonepropionase from Pseudomonas syringae pv. tomato (strain ATCC BAA-871 / DC3000).